We begin with the raw amino-acid sequence, 433 residues long: ATP-dependent protease ATPase subunit HslU (433 aa).

Residues V18, 60–65, D246, E311, and R383 contribute to the ATP site; that span reads GVGKTE.

This sequence belongs to the ClpX chaperone family. HslU subfamily. As to quaternary structure, a double ring-shaped homohexamer of HslV is capped on each side by a ring-shaped HslU homohexamer. The assembly of the HslU/HslV complex is dependent on binding of ATP.

The protein localises to the cytoplasm. In terms of biological role, ATPase subunit of a proteasome-like degradation complex; this subunit has chaperone activity. The binding of ATP and its subsequent hydrolysis by HslU are essential for unfolding of protein substrates subsequently hydrolyzed by HslV. HslU recognizes the N-terminal part of its protein substrates and unfolds these before they are guided to HslV for hydrolysis. The protein is ATP-dependent protease ATPase subunit HslU of Rhodopseudomonas palustris (strain BisA53).